We begin with the raw amino-acid sequence, 726 residues long: Catalase-peroxidase (726 aa).

The segment at residues 90-213 (WHAAGTYRIG…LAAVQMGLIY (124 aa)) is a cross-link (tryptophyl-tyrosyl-methioninium (Trp-Tyr) (with M-239)). His91 (proton acceptor) is an active-site residue. The tryptophyl-tyrosyl-methioninium (Tyr-Met) (with W-90) cross-link spans 213-239 (YVNPEGPNGNPDPLAAARDIRETFARM). His254 provides a ligand contact to heme b. The segment at 334 to 359 (AHQWKPKHGAGANTVPDAHDPSKRHA) is disordered.

The protein belongs to the peroxidase family. Peroxidase/catalase subfamily. Homodimer or homotetramer. Heme b is required as a cofactor. In terms of processing, formation of the three residue Trp-Tyr-Met cross-link is important for the catalase, but not the peroxidase activity of the enzyme.

It carries out the reaction H2O2 + AH2 = A + 2 H2O. It catalyses the reaction 2 H2O2 = O2 + 2 H2O. Functionally, bifunctional enzyme with both catalase and broad-spectrum peroxidase activity. The sequence is that of Catalase-peroxidase from Bradyrhizobium sp. (strain BTAi1 / ATCC BAA-1182).